The chain runs to 206 residues: Fibroblast growth factor 4 (206 aa).

Residues methionine 1–alanine 29 form the signal peptide.

The protein belongs to the heparin-binding growth factors family. Interacts with FGFR1, FGFR2, FGFR3 and FGFR4. Affinity between fibroblast growth factors (FGFs) and their receptors is increased by heparan sulfate glycosaminoglycans that function as coreceptors.

Its subcellular location is the secreted. Functionally, plays an important role in the regulation of embryonic development, cell proliferation, and cell differentiation. Required for normal limb and cardiac valve development during embryogenesis. May play a role in embryonic molar tooth bud development via inducing the expression of MSX1, MSX2 and MSX1-mediated expression of SDC1 in dental mesenchyme cells. The polypeptide is Fibroblast growth factor 4 (Bos taurus (Bovine)).